The chain runs to 259 residues: GDP-perosamine N-formyltransferase (259 aa).

Residues 89-91 (SLI) and 139-143 (DENFD) contribute to the (6S)-5,6,7,8-tetrahydrofolate site.

The protein belongs to the Fmt family. Homodimer.

It carries out the reaction GDP-alpha-D-perosamine + (6R)-10-formyltetrahydrofolate = GDP-N-formyl-alpha-D-perosamine + (6S)-5,6,7,8-tetrahydrofolate + H(+). It functions in the pathway bacterial outer membrane biogenesis; lipopolysaccharide biosynthesis. Its function is as follows. Involved in the lipopolysaccharide (LPS) O-antigen biosynthesis. Catalyzes the transfer of a formyl group to GDP-perosamine, leading to the formation of GDP-N-formylperosamine. Is critical for full bacterial virulence. This Brucella abortus (strain 2308) protein is GDP-perosamine N-formyltransferase.